Here is a 258-residue protein sequence, read N- to C-terminus: UDP-N-acetylenolpyruvoylglucosamine reductase (258 aa).

Arg-142 is a catalytic residue. The active-site Proton donor is the Ser-184. Glu-254 is a catalytic residue.

Belongs to the MurB family. FAD is required as a cofactor.

Its subcellular location is the cytoplasm. The catalysed reaction is UDP-N-acetyl-alpha-D-muramate + NADP(+) = UDP-N-acetyl-3-O-(1-carboxyvinyl)-alpha-D-glucosamine + NADPH + H(+). It functions in the pathway cell wall biogenesis; peptidoglycan biosynthesis. Cell wall formation. The protein is UDP-N-acetylenolpyruvoylglucosamine reductase of Campylobacter jejuni (strain RM1221).